The primary structure comprises 66 residues: M-poneratoxin-Dq3a (66 aa).

Residues 1 to 23 (MKLSALSIIFGMILVMTIMYTKA) form the signal peptide. The propeptide occupies 24-43 (EAEAEAEADADADAKAEAEA).

The protein belongs to the non-disulfide-bridged peptide (NDBP) superfamily. Medium-length antimicrobial peptide (group 3) family. Ponericin-W subfamily. In terms of tissue distribution, expressed by the venom gland.

The protein localises to the secreted. Its subcellular location is the target cell membrane. May have antimicrobial properties by disrupting the integrity of the bacterial cell membrane. In addition, when tested in vitro on the parasite Trypanosoma cruzi (responsible of the Chagas disease), is able to potently reduce the number of the three forms (epimastigote, trypomastigote and amastigote) by inducing cell death through necrosis. Its function is as follows. May have antimicrobial properties by disrupting the integrity of the bacterial cell membrane. In addition, when tested in vitro on the parasite Trypanosoma cruzi (responsible of the Chagas disease), is able to moderately reduce the number of the forms epimastigote and trypomastigote. Its activity on the amastigote form has not been tested. Functionally, may have antimicrobial properties by disrupting the integrity of the bacterial cell membrane. In addition, when tested in vitro on the parasite Trypanosoma cruzi (responsible of the Chagas disease), shows only a weak reduction of the number of the trypomastigote forms. Has no activity on the epimastigote forms. Its activity on the amastigote form has not been tested. This Dinoponera quadriceps (South American ant) protein is M-poneratoxin-Dq3a.